We begin with the raw amino-acid sequence, 123 residues long: Ribonuclease P protein component (123 aa).

This sequence belongs to the RnpA family. In terms of assembly, consists of a catalytic RNA component (M1 or rnpB) and a protein subunit.

The catalysed reaction is Endonucleolytic cleavage of RNA, removing 5'-extranucleotides from tRNA precursor.. RNaseP catalyzes the removal of the 5'-leader sequence from pre-tRNA to produce the mature 5'-terminus. It can also cleave other RNA substrates such as 4.5S RNA. The protein component plays an auxiliary but essential role in vivo by binding to the 5'-leader sequence and broadening the substrate specificity of the ribozyme. This chain is Ribonuclease P protein component, found in Streptomyces griseus subsp. griseus (strain JCM 4626 / CBS 651.72 / NBRC 13350 / KCC S-0626 / ISP 5235).